We begin with the raw amino-acid sequence, 462 residues long: Argininosuccinate lyase (462 aa).

The protein belongs to the lyase 1 family. Argininosuccinate lyase subfamily.

The protein localises to the cytoplasm. It carries out the reaction 2-(N(omega)-L-arginino)succinate = fumarate + L-arginine. Its pathway is amino-acid biosynthesis; L-arginine biosynthesis; L-arginine from L-ornithine and carbamoyl phosphate: step 3/3. The polypeptide is Argininosuccinate lyase (Caldicellulosiruptor saccharolyticus (strain ATCC 43494 / DSM 8903 / Tp8T 6331)).